We begin with the raw amino-acid sequence, 273 residues long: Formamidopyrimidine-DNA glycosylase (273 aa).

P2 acts as the Schiff-base intermediate with DNA in catalysis. The Proton donor role is filled by E3. K58 acts as the Proton donor; for beta-elimination activity in catalysis. Residues H92, R111, and K153 each coordinate DNA. The FPG-type zinc-finger motif lies at 238 to 272 (MVYARDGQECLSCSSSIIKTKHSGRSTFYCKSCQK). Catalysis depends on R262, which acts as the Proton donor; for delta-elimination activity.

It belongs to the FPG family. Monomer. It depends on Zn(2+) as a cofactor.

The enzyme catalyses Hydrolysis of DNA containing ring-opened 7-methylguanine residues, releasing 2,6-diamino-4-hydroxy-5-(N-methyl)formamidopyrimidine.. The catalysed reaction is 2'-deoxyribonucleotide-(2'-deoxyribose 5'-phosphate)-2'-deoxyribonucleotide-DNA = a 3'-end 2'-deoxyribonucleotide-(2,3-dehydro-2,3-deoxyribose 5'-phosphate)-DNA + a 5'-end 5'-phospho-2'-deoxyribonucleoside-DNA + H(+). Its function is as follows. Involved in base excision repair of DNA damaged by oxidation or by mutagenic agents. Acts as a DNA glycosylase that recognizes and removes damaged bases. Has a preference for oxidized purines, such as 7,8-dihydro-8-oxoguanine (8-oxoG). Has AP (apurinic/apyrimidinic) lyase activity and introduces nicks in the DNA strand. Cleaves the DNA backbone by beta-delta elimination to generate a single-strand break at the site of the removed base with both 3'- and 5'-phosphates. The sequence is that of Formamidopyrimidine-DNA glycosylase from Rickettsia bellii (strain OSU 85-389).